The following is a 221-amino-acid chain: Probable septum site-determining protein MinC (221 aa).

It belongs to the MinC family. Interacts with MinD and FtsZ.

Functionally, cell division inhibitor that blocks the formation of polar Z ring septums. Rapidly oscillates between the poles of the cell to destabilize FtsZ filaments that have formed before they mature into polar Z rings. Prevents FtsZ polymerization. This chain is Probable septum site-determining protein MinC, found in Shewanella halifaxensis (strain HAW-EB4).